The following is a 121-amino-acid chain: MKIVISKPDKNKLRQKRHRRIRGKLSGTADRPRLNIFRSNTGIYAQVIDDVAGVTLASASTLDKEVSKGTKTEQAIVVGKLVAERAVAKGISEVVFDRGGYLYHGRVKALADSARENGLKF.

Belongs to the universal ribosomal protein uL18 family. In terms of assembly, part of the 50S ribosomal subunit; part of the 5S rRNA/L5/L18/L25 subcomplex. Contacts the 5S and 23S rRNAs.

Functionally, this is one of the proteins that bind and probably mediate the attachment of the 5S RNA into the large ribosomal subunit, where it forms part of the central protuberance. In Streptococcus thermophilus (strain CNRZ 1066), this protein is Large ribosomal subunit protein uL18.